The following is a 203-amino-acid chain: Holliday junction branch migration complex subunit RuvA (203 aa).

The segment at 1-63 is domain I; that stretch reads MIAFVSGPVA…EDSLTLYGFV (63 aa). Residues 64–141 form a domain II region; that stretch reads DDDERQVFEL…GEPLGTGGPA (78 aa). The interval 141–145 is flexible linker; that stretch reads AIGRA. Positions 146-203 are domain III; sequence VTTGWREQLHAALIGLGYATREADEAVAAVAPQAEAAGGTPQVGQLLKAALQTLNRTR.

It belongs to the RuvA family. As to quaternary structure, homotetramer. Forms an RuvA(8)-RuvB(12)-Holliday junction (HJ) complex. HJ DNA is sandwiched between 2 RuvA tetramers; dsDNA enters through RuvA and exits via RuvB. An RuvB hexamer assembles on each DNA strand where it exits the tetramer. Each RuvB hexamer is contacted by two RuvA subunits (via domain III) on 2 adjacent RuvB subunits; this complex drives branch migration. In the full resolvosome a probable DNA-RuvA(4)-RuvB(12)-RuvC(2) complex forms which resolves the HJ.

The protein localises to the cytoplasm. The RuvA-RuvB-RuvC complex processes Holliday junction (HJ) DNA during genetic recombination and DNA repair, while the RuvA-RuvB complex plays an important role in the rescue of blocked DNA replication forks via replication fork reversal (RFR). RuvA specifically binds to HJ cruciform DNA, conferring on it an open structure. The RuvB hexamer acts as an ATP-dependent pump, pulling dsDNA into and through the RuvAB complex. HJ branch migration allows RuvC to scan DNA until it finds its consensus sequence, where it cleaves and resolves the cruciform DNA. This chain is Holliday junction branch migration complex subunit RuvA, found in Streptomyces avermitilis (strain ATCC 31267 / DSM 46492 / JCM 5070 / NBRC 14893 / NCIMB 12804 / NRRL 8165 / MA-4680).